The sequence spans 125 residues: uncharacterized protein (125 aa).

Residues 1–21 are disordered; that stretch reads MLFYHCSSFSSSSSSSSSSAS. Residues 7–21 show a composition bias toward low complexity; it reads SSFSSSSSSSSSSAS.

This is an uncharacterized protein from Saccharomyces cerevisiae (strain ATCC 204508 / S288c) (Baker's yeast).